A 156-amino-acid chain; its full sequence is Small ribosomal subunit protein uS7 (156 aa).

It belongs to the universal ribosomal protein uS7 family. In terms of assembly, part of the 30S ribosomal subunit. Contacts proteins S9 and S11.

Its function is as follows. One of the primary rRNA binding proteins, it binds directly to 16S rRNA where it nucleates assembly of the head domain of the 30S subunit. Is located at the subunit interface close to the decoding center, probably blocks exit of the E-site tRNA. The chain is Small ribosomal subunit protein uS7 from Desulforudis audaxviator (strain MP104C).